A 336-amino-acid chain; its full sequence is Anthranilate phosphoribosyltransferase (336 aa).

Residues G82, 85–86, T90, 92–95, 110–118, and S122 contribute to the 5-phospho-alpha-D-ribose 1-diphosphate site; these read GD, NIST, and KHGNRSVSS. Residue G82 coordinates anthranilate. S94 contacts Mg(2+). N113 provides a ligand contact to anthranilate. R168 contacts anthranilate. 2 residues coordinate Mg(2+): D227 and E228.

Belongs to the anthranilate phosphoribosyltransferase family. In terms of assembly, homodimer. It depends on Mg(2+) as a cofactor.

The enzyme catalyses N-(5-phospho-beta-D-ribosyl)anthranilate + diphosphate = 5-phospho-alpha-D-ribose 1-diphosphate + anthranilate. It participates in amino-acid biosynthesis; L-tryptophan biosynthesis; L-tryptophan from chorismate: step 2/5. Its function is as follows. Catalyzes the transfer of the phosphoribosyl group of 5-phosphorylribose-1-pyrophosphate (PRPP) to anthranilate to yield N-(5'-phosphoribosyl)-anthranilate (PRA). In Leptospira interrogans serogroup Icterohaemorrhagiae serovar Lai (strain 56601), this protein is Anthranilate phosphoribosyltransferase.